A 170-amino-acid chain; its full sequence is Superoxide dismutase [Fe] (170 aa).

Positions 27, 81, 163, and 167 each coordinate Fe cation.

It belongs to the iron/manganese superoxide dismutase family. In terms of assembly, homodimer. The cofactor is Fe cation.

It carries out the reaction 2 superoxide + 2 H(+) = H2O2 + O2. Functionally, destroys superoxide anion radicals which are normally produced within the cells and which are toxic to biological systems. The polypeptide is Superoxide dismutase [Fe] (sodA) (Raoultella planticola (Klebsiella planticola)).